Reading from the N-terminus, the 342-residue chain is ATPase asna-1 (342 aa).

26-33 serves as a coordination point for ATP; it reads KGGVGKTT. Residue Asp-55 is part of the active site. Residues Glu-243 and Asn-270 each contribute to the ATP site. Positions 285 and 288 each coordinate Zn(2+).

This sequence belongs to the arsA ATPase family. As to quaternary structure, homodimer.

Its subcellular location is the cytoplasm. The protein localises to the endoplasmic reticulum. ATPase required for the post-translational delivery of tail-anchored (TA) proteins to the endoplasmic reticulum. Recognizes and selectively binds the transmembrane domain of TA proteins in the cytosol. This complex then targets to the endoplasmic reticulum by membrane-bound receptors, where the tail-anchored protein is released for insertion. This process is regulated by ATP binding and hydrolysis. ATP binding drives the homodimer towards the closed dimer state, facilitating recognition of newly synthesized TA membrane proteins. ATP hydrolysis is required for insertion. Subsequently, the homodimer reverts towards the open dimer state, lowering its affinity for the membrane-bound receptor, and returning it to the cytosol to initiate a new round of targeting. May be involved in insulin signaling. This Caenorhabditis elegans protein is ATPase asna-1.